The primary structure comprises 355 residues: MNQKKKIMIVAGGSGGHVFPGLSVAHYLINHGYQVVWLGTADRIESKLVPQYGIDIKFIRINGWNGEKLHIKCIMPLFICLAIYQARKIIKYWKPDIVLGMGGYVSGPGGLAAWTCGVPLIIHEQNRIIGLTNRYLSIFSKKVLQGFPGTFPNAKMVGNPIRRAILAVPNPSRRWKGRVGPIRVLVIGGSQGAHILNKTIPNMAEKLSDKLIIWHQVGEQDFKKVIWAYQKIKQSYHRIVKFIDDIAQAYAWADILISRAGALTVSEVSIVGLPAIFVPFIHHKDRQQYWNAVPLVQAGAAKIIEQKNFTSDVVSAMLESWDRKTLCSMAQRARSIAAPNATQQVSQVIIEYLKK.

Residues 14-16, N126, R162, S190, I243, 262-267, and Q288 each bind UDP-N-acetyl-alpha-D-glucosamine; these read SGG and ALTVSE.

It belongs to the glycosyltransferase 28 family. MurG subfamily.

It is found in the cell inner membrane. The catalysed reaction is di-trans,octa-cis-undecaprenyl diphospho-N-acetyl-alpha-D-muramoyl-L-alanyl-D-glutamyl-meso-2,6-diaminopimeloyl-D-alanyl-D-alanine + UDP-N-acetyl-alpha-D-glucosamine = di-trans,octa-cis-undecaprenyl diphospho-[N-acetyl-alpha-D-glucosaminyl-(1-&gt;4)]-N-acetyl-alpha-D-muramoyl-L-alanyl-D-glutamyl-meso-2,6-diaminopimeloyl-D-alanyl-D-alanine + UDP + H(+). It functions in the pathway cell wall biogenesis; peptidoglycan biosynthesis. Cell wall formation. Catalyzes the transfer of a GlcNAc subunit on undecaprenyl-pyrophosphoryl-MurNAc-pentapeptide (lipid intermediate I) to form undecaprenyl-pyrophosphoryl-MurNAc-(pentapeptide)GlcNAc (lipid intermediate II). The polypeptide is UDP-N-acetylglucosamine--N-acetylmuramyl-(pentapeptide) pyrophosphoryl-undecaprenol N-acetylglucosamine transferase (Blochmanniella pennsylvanica (strain BPEN)).